We begin with the raw amino-acid sequence, 509 residues long: Steroid 17-alpha-hydroxylase/17,20 lyase (509 aa).

Asparagine 202 is a binding site for substrate. Cysteine 442 is a binding site for heme.

The protein belongs to the cytochrome P450 family. Heme serves as cofactor.

The protein localises to the endoplasmic reticulum membrane. Its subcellular location is the microsome membrane. It carries out the reaction a C21-steroid + reduced [NADPH--hemoprotein reductase] + O2 = a 17alpha-hydroxy-C21-steroid + oxidized [NADPH--hemoprotein reductase] + H2O + H(+). The enzyme catalyses progesterone + reduced [NADPH--hemoprotein reductase] + O2 = 17alpha-hydroxyprogesterone + oxidized [NADPH--hemoprotein reductase] + H2O + H(+). The catalysed reaction is pregnenolone + reduced [NADPH--hemoprotein reductase] + O2 = 17alpha-hydroxypregnenolone + oxidized [NADPH--hemoprotein reductase] + H2O + H(+). It catalyses the reaction 17alpha-hydroxyprogesterone + reduced [NADPH--hemoprotein reductase] + O2 = androst-4-ene-3,17-dione + acetate + oxidized [NADPH--hemoprotein reductase] + H2O + 2 H(+). It carries out the reaction 17alpha-hydroxyprogesterone + reduced [NADPH--hemoprotein reductase] + O2 = 16alpha,17alpha-dihydroxyprogesterone + oxidized [NADPH--hemoprotein reductase] + H2O + H(+). The enzyme catalyses 16alpha,17alpha-dihydroxyprogesterone + reduced [NADPH--hemoprotein reductase] + O2 = 6beta,16alpha,17alpha-trihydroxyprogesterone + oxidized [NADPH--hemoprotein reductase] + H2O + H(+). The catalysed reaction is 17alpha-hydroxypregnenolone + reduced [NADPH--hemoprotein reductase] + O2 = 3beta-hydroxyandrost-5-en-17-one + acetate + oxidized [NADPH--hemoprotein reductase] + H2O + 2 H(+). It catalyses the reaction 16alpha,17alpha-dihydroxypregnenolone + reduced [NADPH--hemoprotein reductase] + O2 = 3beta,16alpha-dihydroxy-androst-5-en-17-one + acetate + oxidized [NADPH--hemoprotein reductase] + H2O + 2 H(+). It carries out the reaction 3beta-hydroxyandrost-5-en-17-one + reduced [NADPH--hemoprotein reductase] + O2 = 3beta,16alpha-dihydroxy-androst-5-en-17-one + oxidized [NADPH--hemoprotein reductase] + H2O + H(+). The enzyme catalyses androst-4-ene-3,17-dione + reduced [NADPH--hemoprotein reductase] + O2 = 16alpha-hydroxyandrost-4-ene-3,17-dione + oxidized [NADPH--hemoprotein reductase] + H2O + H(+). It participates in steroid hormone biosynthesis. The protein operates within steroid biosynthesis; glucocorticoid biosynthesis. With respect to regulation, regulated predominantly by intracellular cAMP levels. The 17,20-lyase activity is stimulated by cytochrome b5, which acts as an allosteric effector increasing the Vmax of the lyase activity. Functionally, a cytochrome P450 monooxygenase involved in corticoid and androgen biosynthesis. Catalyzes 17-alpha hydroxylation of C21 steroids, which is common for both pathways. A second oxidative step, required only for androgen synthesis, involves an acyl-carbon cleavage. The 17-alpha hydroxy intermediates, as part of adrenal glucocorticoids biosynthesis pathway, are precursors of cortisol. Hydroxylates steroid hormones, pregnenolone and progesterone to form 17-alpha hydroxy metabolites, followed by the cleavage of the C17-C20 bond to form C19 steroids, dehydroepiandrosterone (DHEA) and androstenedione. Has 16-alpha hydroxylase activity. Catalyzes 16-alpha hydroxylation of 17-alpha hydroxy pregnenolone, followed by the cleavage of the C17-C20 bond to form 16-alpha-hydroxy DHEA. Also 16-alpha hydroxylates androgens, relevant for estriol synthesis. Mechanistically, uses molecular oxygen inserting one oxygen atom into a substrate, and reducing the second into a water molecule, with two electrons provided by NADPH via cytochrome P450 reductase (CPR; NADPH-ferrihemoprotein reductase). The chain is Steroid 17-alpha-hydroxylase/17,20 lyase (CYP17A1) from Ovis aries (Sheep).